Consider the following 314-residue polypeptide: Homoserine O-acetyltransferase (314 aa).

Cys142 (acyl-thioester intermediate) is an active-site residue. Substrate contacts are provided by Lys163 and Ser192. The active-site Proton acceptor is His235. Glu237 is an active-site residue. Arg249 lines the substrate pocket.

It belongs to the MetA family.

It localises to the cytoplasm. The catalysed reaction is L-homoserine + acetyl-CoA = O-acetyl-L-homoserine + CoA. Its pathway is amino-acid biosynthesis; L-methionine biosynthesis via de novo pathway; O-acetyl-L-homoserine from L-homoserine: step 1/1. Functionally, transfers an acetyl group from acetyl-CoA to L-homoserine, forming acetyl-L-homoserine. The polypeptide is Homoserine O-acetyltransferase (Streptococcus pneumoniae serotype 19F (strain G54)).